The following is a 205-amino-acid chain: Ribosomal RNA small subunit methyltransferase G (205 aa).

S-adenosyl-L-methionine is bound by residues G76, L81, 127-128, and R140; that span reads IE.

It belongs to the methyltransferase superfamily. RNA methyltransferase RsmG family.

The protein localises to the cytoplasm. It carries out the reaction guanosine(527) in 16S rRNA + S-adenosyl-L-methionine = N(7)-methylguanosine(527) in 16S rRNA + S-adenosyl-L-homocysteine. Its function is as follows. Specifically methylates the N7 position of guanine in position 527 of 16S rRNA. This chain is Ribosomal RNA small subunit methyltransferase G, found in Francisella tularensis subsp. tularensis (strain WY96-3418).